The primary structure comprises 142 residues: Nucleoside diphosphate kinase (142 aa).

6 residues coordinate ATP: Lys11, Phe59, Arg87, Thr93, Arg104, and Asn114. The active-site Pros-phosphohistidine intermediate is His117.

This sequence belongs to the NDK family. Mg(2+) is required as a cofactor.

The protein resides in the cytoplasm. It catalyses the reaction a 2'-deoxyribonucleoside 5'-diphosphate + ATP = a 2'-deoxyribonucleoside 5'-triphosphate + ADP. It carries out the reaction a ribonucleoside 5'-diphosphate + ATP = a ribonucleoside 5'-triphosphate + ADP. In terms of biological role, major role in the synthesis of nucleoside triphosphates other than ATP. The ATP gamma phosphate is transferred to the NDP beta phosphate via a ping-pong mechanism, using a phosphorylated active-site intermediate. This Hyperthermus butylicus (strain DSM 5456 / JCM 9403 / PLM1-5) protein is Nucleoside diphosphate kinase.